Here is a 392-residue protein sequence, read N- to C-terminus: DNA-directed RNA polymerase subunit Rpo1C (392 aa).

Belongs to the RNA polymerase beta' chain family. As to quaternary structure, part of the 13-subunit RNA polymerase complex.

The protein localises to the cytoplasm. It catalyses the reaction RNA(n) + a ribonucleoside 5'-triphosphate = RNA(n+1) + diphosphate. DNA-dependent RNA polymerase (RNAP) catalyzes the transcription of DNA into RNA using the four ribonucleoside triphosphates as substrates. Forms part of the jaw domain. This chain is DNA-directed RNA polymerase subunit Rpo1C, found in Saccharolobus solfataricus (strain ATCC 35092 / DSM 1617 / JCM 11322 / P2) (Sulfolobus solfataricus).